The following is a 262-amino-acid chain: Mlc titration factor A (262 aa).

4 residues coordinate Zn(2+): histidine 111, histidine 148, histidine 152, and glutamate 211.

Belongs to the MtfA family. Interacts with Mlc. Zn(2+) is required as a cofactor.

It localises to the cytoplasm. Involved in the modulation of the activity of the glucose-phosphotransferase system (glucose-PTS). Interacts with the transcriptional repressor Mlc, preventing its interaction with DNA and leading to the modulation of expression of genes regulated by Mlc, including ptsG, which encodes the PTS system glucose-specific EIICB component. Its function is as follows. Shows zinc-dependent metallopeptidase activity. In Serratia proteamaculans (strain 568), this protein is Mlc titration factor A.